The chain runs to 318 residues: tRNA U34 carboxymethyltransferase (318 aa).

Carboxy-S-adenosyl-L-methionine is bound by residues Lys-88, Trp-102, Lys-107, Gly-126, 176 to 177 (LE), Met-192, Tyr-196, and Arg-311.

Belongs to the class I-like SAM-binding methyltransferase superfamily. CmoB family. As to quaternary structure, homotetramer.

The catalysed reaction is carboxy-S-adenosyl-L-methionine + 5-hydroxyuridine(34) in tRNA = 5-carboxymethoxyuridine(34) in tRNA + S-adenosyl-L-homocysteine + H(+). Catalyzes carboxymethyl transfer from carboxy-S-adenosyl-L-methionine (Cx-SAM) to 5-hydroxyuridine (ho5U) to form 5-carboxymethoxyuridine (cmo5U) at position 34 in tRNAs. The protein is tRNA U34 carboxymethyltransferase of Pseudomonas putida (strain W619).